A 447-amino-acid chain; its full sequence is Lipid II isoglutaminyl synthase (glutamine-hydrolyzing) subunit MurT (447 aa).

4 residues coordinate Zn(2+): Cys205, Cys208, Cys227, and Cys230. Asp355 is an active-site residue.

The protein belongs to the MurCDEF family. MurT subfamily. Forms a heterodimer with GatD.

The enzyme catalyses beta-D-GlcNAc-(1-&gt;4)-Mur2Ac(oyl-L-Ala-gamma-D-Glu-L-Lys-D-Ala-D-Ala)-di-trans,octa-cis-undecaprenyl diphosphate + L-glutamine + ATP + H2O = beta-D-GlcNAc-(1-&gt;4)-Mur2Ac(oyl-L-Ala-D-isoglutaminyl-L-Lys-D-Ala-D-Ala)-di-trans,octa-cis-undecaprenyl diphosphate + L-glutamate + ADP + phosphate + H(+). It carries out the reaction beta-D-GlcNAc-(1-&gt;4)-Mur2Ac(oyl-L-Ala-gamma-D-Glu-L-Lys-D-Ala-D-Ala)-di-trans,octa-cis-undecaprenyl diphosphate + ATP = beta-D-GlcNAc-(1-&gt;4)-Mur2Ac(oyl-L-Ala-gamma-D-O-P-Glu-L-Lys-D-Ala-D-Ala)-di-trans,octa-cis-undecaprenyl diphosphate + ADP. The catalysed reaction is beta-D-GlcNAc-(1-&gt;4)-Mur2Ac(oyl-L-Ala-gamma-D-O-P-Glu-L-Lys-D-Ala-D-Ala)-di-trans,octa-cis-undecaprenyl diphosphate + NH4(+) = beta-D-GlcNAc-(1-&gt;4)-Mur2Ac(oyl-L-Ala-D-isoglutaminyl-L-Lys-D-Ala-D-Ala)-di-trans,octa-cis-undecaprenyl diphosphate + phosphate + H(+). Its pathway is cell wall biogenesis; peptidoglycan biosynthesis. In terms of biological role, the lipid II isoglutaminyl synthase complex catalyzes the formation of alpha-D-isoglutamine in the cell wall lipid II stem peptide. The MurT subunit catalyzes the ATP-dependent amidation of D-glutamate residue of lipid II, converting it to an isoglutamine residue. The protein is Lipid II isoglutaminyl synthase (glutamine-hydrolyzing) subunit MurT of Streptococcus pneumoniae (strain ATCC BAA-255 / R6).